The following is a 293-amino-acid chain: MASITLTPSEKDIQAFLEHYQTSLAPSKNPYIRYFLKLPQATVSIYTSGKILLQGEGAEKYASFFGYQAVEQTSGQNLPLIGTDEVGNGSYFGGLAVVAAFVTPDQHDFLRKLGVGDSKTLTDQKIRQIAPILKEKIQHQALLLSPSKYNEVIGDRYNAVSVKVALHNQAIYLLLQKGVQPEKIVIDAFTSAKNYDKYLAQETNRFSNPISLEEKAEGKYLAVAVSSVIARDLFLENLENLGRELGYQLPSGAGTASDKVASQILQAYGMQGLSFCAKLHFKNTEKAKKRLER.

Positions 78-293 (LPLIGTDEVG…TEKAKKRLER (216 aa)) constitute an RNase H type-2 domain. A divalent metal cation contacts are provided by Asp84, Glu85, and Asp187.

It belongs to the RNase HII family. RnhC subfamily. It depends on Mn(2+) as a cofactor. Requires Mg(2+) as cofactor.

The protein localises to the cytoplasm. The catalysed reaction is Endonucleolytic cleavage to 5'-phosphomonoester.. Endonuclease that specifically degrades the RNA of RNA-DNA hybrids. The protein is Ribonuclease HIII of Streptococcus pneumoniae serotype 19F (strain G54).